We begin with the raw amino-acid sequence, 1368 residues long: DNA-directed RNA polymerase subunit beta (1368 aa).

The protein belongs to the RNA polymerase beta chain family. The RNAP catalytic core consists of 2 alpha, 1 beta, 1 beta' and 1 omega subunit. When a sigma factor is associated with the core the holoenzyme is formed, which can initiate transcription.

It catalyses the reaction RNA(n) + a ribonucleoside 5'-triphosphate = RNA(n+1) + diphosphate. Its function is as follows. DNA-dependent RNA polymerase catalyzes the transcription of DNA into RNA using the four ribonucleoside triphosphates as substrates. The chain is DNA-directed RNA polymerase subunit beta from Janthinobacterium sp. (strain Marseille) (Minibacterium massiliensis).